The following is a 396-amino-acid chain: Argininosuccinate synthase (396 aa).

An ATP-binding site is contributed by Ala9 to Ser17. Residue Tyr85 coordinates L-citrulline. Gly115 serves as a coordination point for ATP. Residues Thr117, Asn121, and Asp122 each contribute to the L-aspartate site. Asn121 is an L-citrulline binding site. Residues Arg125, Ser173, Glu258, and Tyr270 each coordinate L-citrulline.

It belongs to the argininosuccinate synthase family. Type 1 subfamily. As to quaternary structure, homotetramer.

It is found in the cytoplasm. It carries out the reaction L-citrulline + L-aspartate + ATP = 2-(N(omega)-L-arginino)succinate + AMP + diphosphate + H(+). The protein operates within amino-acid biosynthesis; L-arginine biosynthesis; L-arginine from L-ornithine and carbamoyl phosphate: step 2/3. This chain is Argininosuccinate synthase, found in Streptococcus mutans serotype c (strain ATCC 700610 / UA159).